We begin with the raw amino-acid sequence, 139 residues long: Small ribosomal subunit protein uS12 (139 aa).

Residues Gly-119 to Ser-139 form a disordered region.

Belongs to the universal ribosomal protein uS12 family. Part of the 30S ribosomal subunit. Contacts proteins S8 and S17. May interact with IF1 in the 30S initiation complex.

Functionally, with S4 and S5 plays an important role in translational accuracy. Interacts with and stabilizes bases of the 16S rRNA that are involved in tRNA selection in the A site and with the mRNA backbone. Located at the interface of the 30S and 50S subunits, it traverses the body of the 30S subunit contacting proteins on the other side and probably holding the rRNA structure together. The combined cluster of proteins S8, S12 and S17 appears to hold together the shoulder and platform of the 30S subunit. This chain is Small ribosomal subunit protein uS12, found in Mycoplasma genitalium (strain ATCC 33530 / DSM 19775 / NCTC 10195 / G37) (Mycoplasmoides genitalium).